The following is a 798-amino-acid chain: Putative antiporter subunit mnhA2 (798 aa).

A run of 21 helical transmembrane segments spans residues 1–21 (MSLV…LFTL), 33–53 (IALL…PSVM), 78–98 (GLSL…VYYA), 109–129 (LPRF…IVTA), 133–153 (ILMY…IVYW), 167–187 (FMIT…IYIV), 209–229 (FIPI…QFPF), 241–261 (TPVS…FLLF), 272–292 (FYIY…AVNA), 300–320 (AILA…VGLG), 337–357 (MILF…GALF), 381–401 (VFPI…GIPF), 431–451 (IITV…VYMI), 472–492 (PFLF…IFFI), 526–546 (GFNL…IMAL), 593–613 (ITIT…QAGF), 625–645 (GPIE…LTFI), 649–669 (LTMV…FILM), 674–694 (LALT…VSFS), 710–730 (AVKI…VFIA), and 766–786 (IDTL…YTLL).

Belongs to the CPA3 antiporters (TC 2.A.63) subunit A family. As to quaternary structure, may form a heterooligomeric complex that consists of seven subunits: mnhA2, mnhB2, mnhC2, mnhD2, mnhE2, mnhF2 and mnhG2.

It localises to the cell membrane. The chain is Putative antiporter subunit mnhA2 (mnhA2) from Staphylococcus saprophyticus subsp. saprophyticus (strain ATCC 15305 / DSM 20229 / NCIMB 8711 / NCTC 7292 / S-41).